A 216-amino-acid chain; its full sequence is Pyrophosphatase PpaX (216 aa).

The active-site Nucleophile is Asp9.

It belongs to the HAD-like hydrolase superfamily. PpaX family. It depends on Mg(2+) as a cofactor.

It carries out the reaction diphosphate + H2O = 2 phosphate + H(+). In terms of biological role, hydrolyzes pyrophosphate formed during P-Ser-HPr dephosphorylation by HPrK/P. Might play a role in controlling the intracellular pyrophosphate pool. This chain is Pyrophosphatase PpaX, found in Bacillus thuringiensis (strain Al Hakam).